The following is a 653-amino-acid chain: Beta-galactosidase (653 aa).

Positions 1–22 are cleaved as a signal peptide; it reads MPGVVRLLALLLVPLLLGSARG. The propeptide occupies 23-27; sequence LHNAT. An N-linked (GlcNAc...) asparagine glycan is attached at Asn-25. Tyr-82 contributes to the substrate binding site. N-linked (GlcNAc...) asparagine glycosylation is present at Asn-96. 2 residues coordinate substrate: Glu-128 and Asn-186. Catalysis depends on Glu-187, which acts as the Proton donor. Cys-194 and Cys-229 are disulfide-bonded. Residue Asn-246 is glycosylated (N-linked (GlcNAc...) asparagine). Glu-267 serves as the catalytic Nucleophile. Tyr-332 is a binding site for substrate. N-linked (GlcNAc...) asparagine glycosylation is found at Asn-463, Asn-497, and Asn-554. An intrachain disulfide couples Cys-625 to Cys-633.

It belongs to the glycosyl hydrolase 35 family. In terms of assembly, homodimer. May form higher multimers.

The protein resides in the lysosome. The enzyme catalyses Hydrolysis of terminal non-reducing beta-D-galactose residues in beta-D-galactosides.. Cleaves beta-linked terminal galactosyl residues from gangliosides, glycoproteins, and glycosaminoglycans. The chain is Beta-galactosidase (GLB1) from Bos taurus (Bovine).